The sequence spans 433 residues: UDP-N-acetylglucosamine 1-carboxyvinyltransferase 1 (433 aa).

A phosphoenolpyruvate-binding site is contributed by 22 to 23 (KN). Arg-95 is a UDP-N-acetyl-alpha-D-glucosamine binding site. The active-site Proton donor is Cys-119. Cys-119 carries the post-translational modification 2-(S-cysteinyl)pyruvic acid O-phosphothioketal. UDP-N-acetyl-alpha-D-glucosamine is bound by residues 124-128 (RPVDL), Asp-307, and Val-329.

This sequence belongs to the EPSP synthase family. MurA subfamily.

It is found in the cytoplasm. It catalyses the reaction phosphoenolpyruvate + UDP-N-acetyl-alpha-D-glucosamine = UDP-N-acetyl-3-O-(1-carboxyvinyl)-alpha-D-glucosamine + phosphate. Its pathway is cell wall biogenesis; peptidoglycan biosynthesis. In terms of biological role, cell wall formation. Adds enolpyruvyl to UDP-N-acetylglucosamine. The protein is UDP-N-acetylglucosamine 1-carboxyvinyltransferase 1 of Latilactobacillus sakei subsp. sakei (strain 23K) (Lactobacillus sakei subsp. sakei).